Reading from the N-terminus, the 483-residue chain is Acetyltransferase AOL_s00215g273 (483 aa).

Helical transmembrane passes span 9-29, 33-53, 141-161, 191-211, 292-312, 334-354, 372-392, and 453-473; these read ALIG…TSFV, IYPL…TEGL, VAYI…LYTC, IFQM…SVLV, FLVF…VYYG, VTGY…FICW, WFVG…VLWI, and LGGY…GSGF.

It belongs to the wax synthase family.

The protein localises to the membrane. Its pathway is secondary metabolite biosynthesis; terpenoid biosynthesis. In terms of biological role, acetyltransferase; part of the gene cluster that mediates the biosynthesis of sesquiterpenyl epoxy-cyclohexenoids (SECs) such as anthrobotrisins and arthrosporols, metabolites that possess a novel hybrid carbon skeleton consisting of a polyketide-derived epoxycyclohexenol combined with a terpenoid-derived monocyclic sesquiterpenol substructure (PKS-PTS hybrid). The SEC pathway plays an important role for fungal soil colonization via decreasing fungal nematode-capturing ability. The role of the acetyltransferase in SEC biosynthesis has still to be determined. The pathway begins with the biosynthesis of 6-methylsalicylic acid (6-MSA), the first precursor of the polyketide-derived epoxycyclohexenol in arthrosporols, by the polyketide synthase (PKS) AOL_s00215g283 via condensation of 1 acetate and 3 malonate units. The 6-methylsalicylic acid decarboxylase AOL_s00215g281 then catalyzes the decarboxylation of 6-methylsalicylic acid to yield m-cresol. The cytochrome P450 monooxygenase AOL_s00215g282 further oxidizes m-cresol to yield toluquinol. With the assistance of the oxidoreductase AOL_s00215g277, the polyprenyl transferase AOL_s00215g276 catalyzes the farnesylation of toluquinol to produce farnesyl hydroquinone, the hybrid precursor for biosynthesis of SECs. Farnesyl hydroquinone undergoes epoxidation and then subsequent dehydrogenation to form farnesyl epoxy-quinone, the first and simplest SEC. The cytochrome P450 monooxygenase AOL_s00215g278 and the FAD-dependent monooxygenase AOL_s00215g279 might be involved in the oxygenation of the phenol moiety, most likely in the epoxy formation. The cytochrome P450 monooxygenases AOL_s00215g274 and AOL_s00215g280 are involved in specific regional ketone reductions at respectively C-4 and C-1 of farnesyl epoxy-quinone PubMed:33823587. In Arthrobotrys oligospora (strain ATCC 24927 / CBS 115.81 / DSM 1491) (Nematode-trapping fungus), this protein is Acetyltransferase AOL_s00215g273.